The primary structure comprises 558 residues: Oxygen-dependent choline dehydrogenase (558 aa).

8–37 (DYIIIGAGSAGNVLATRLTEDSDVSVLLLE) contacts FAD. H475 acts as the Proton acceptor in catalysis.

This sequence belongs to the GMC oxidoreductase family. Requires FAD as cofactor.

It catalyses the reaction choline + A = betaine aldehyde + AH2. The enzyme catalyses betaine aldehyde + NAD(+) + H2O = glycine betaine + NADH + 2 H(+). It participates in amine and polyamine biosynthesis; betaine biosynthesis via choline pathway; betaine aldehyde from choline (cytochrome c reductase route): step 1/1. Its function is as follows. Involved in the biosynthesis of the osmoprotectant glycine betaine. Catalyzes the oxidation of choline to betaine aldehyde and betaine aldehyde to glycine betaine at the same rate. The polypeptide is Oxygen-dependent choline dehydrogenase (Chromohalobacter salexigens (strain ATCC BAA-138 / DSM 3043 / CIP 106854 / NCIMB 13768 / 1H11)).